The chain runs to 127 residues: Large ribosomal subunit protein bL20 (127 aa).

This sequence belongs to the bacterial ribosomal protein bL20 family.

Functionally, binds directly to 23S ribosomal RNA and is necessary for the in vitro assembly process of the 50S ribosomal subunit. It is not involved in the protein synthesizing functions of that subunit. The polypeptide is Large ribosomal subunit protein bL20 (Opitutus terrae (strain DSM 11246 / JCM 15787 / PB90-1)).